Here is a 215-residue protein sequence, read N- to C-terminus: Leucyl/phenylalanyl-tRNA--protein transferase (215 aa).

It belongs to the L/F-transferase family.

It is found in the cytoplasm. It carries out the reaction N-terminal L-lysyl-[protein] + L-leucyl-tRNA(Leu) = N-terminal L-leucyl-L-lysyl-[protein] + tRNA(Leu) + H(+). The catalysed reaction is N-terminal L-arginyl-[protein] + L-leucyl-tRNA(Leu) = N-terminal L-leucyl-L-arginyl-[protein] + tRNA(Leu) + H(+). It catalyses the reaction L-phenylalanyl-tRNA(Phe) + an N-terminal L-alpha-aminoacyl-[protein] = an N-terminal L-phenylalanyl-L-alpha-aminoacyl-[protein] + tRNA(Phe). Functions in the N-end rule pathway of protein degradation where it conjugates Leu, Phe and, less efficiently, Met from aminoacyl-tRNAs to the N-termini of proteins containing an N-terminal arginine or lysine. The polypeptide is Leucyl/phenylalanyl-tRNA--protein transferase (Campylobacter jejuni subsp. jejuni serotype O:2 (strain ATCC 700819 / NCTC 11168)).